Consider the following 148-residue polypeptide: Large ribosomal subunit protein uL15 (148 aa).

A disordered region spans residues methionine 1 to leucine 57. 2 stretches are compositionally biased toward gly residues: residues arginine 21 to asparagine 35 and alanine 42 to glycine 52.

This sequence belongs to the universal ribosomal protein uL15 family. As to quaternary structure, part of the 50S ribosomal subunit.

Its function is as follows. Binds to the 23S rRNA. This is Large ribosomal subunit protein uL15 from Nitratidesulfovibrio vulgaris (strain ATCC 29579 / DSM 644 / CCUG 34227 / NCIMB 8303 / VKM B-1760 / Hildenborough) (Desulfovibrio vulgaris).